Reading from the N-terminus, the 332-residue chain is MSMPGLGYLILTFVVLLLLVLFFSFVPVGLWISAAAADVRVGIFYMIGMKLRRVPPHRIVNALIKAEKAGLEISIDKLEAHYLAGGNVDRVIDALIAAQRAGIDLVFERAAAIDLAGRNVLEAVQMSVNPKVIETPVVAGVAQDGIELRAKARVTVRADINRLVGGAGEDTIIARVGEGVVSTIGSAASHKEVLENPDMISRTVLAKGLDAGTAFEIVSIDIADVDVGANIGARLRADQAEAEKVMAQAKAEERRAMAVAEEQEMRAETQRMRAKVVEAEAEVPRALAQALREGRIGVMEYLMMQNLQADTAMREALGGGQRGGQPGGQDQK.

Helical transmembrane passes span 6–26 (LGYLILTFVVLLLLVLFFSFV) and 28–48 (VGLWISAAAADVRVGIFYMIG).

This sequence belongs to the flotillin-like FloA family. In terms of assembly, homooligomerizes.

The protein resides in the cell membrane. It is found in the membrane raft. Found in functional membrane microdomains (FMM) that may be equivalent to eukaryotic membrane rafts. FMMs are highly dynamic and increase in number as cells age. Flotillins are thought to be important factors in membrane fluidity. The chain is Flotillin-like protein FloA from Symbiobacterium thermophilum (strain DSM 24528 / JCM 14929 / IAM 14863 / T).